A 65-amino-acid polypeptide reads, in one-letter code: uncharacterized protein (65 aa).

The protein localises to the plastid. It is found in the chloroplast. This is an uncharacterized protein from Mesostigma viride (Green alga).